Here is a 278-residue protein sequence, read N- to C-terminus: HTH-type transcriptional activator RhaS (278 aa).

The HTH araC/xylS-type domain occupies 174–272; it reads NLLLAWLEDH…NWSPRDIRQG (99 aa). 2 consecutive DNA-binding regions (H-T-H motif) follow at residues 191 to 212 and 239 to 262; these read DAVA…KQQT and VTDI…RREF.

In terms of assembly, binds DNA as a dimer.

It is found in the cytoplasm. In terms of biological role, activates expression of the rhaBAD and rhaT operons. This is HTH-type transcriptional activator RhaS from Shigella boydii serotype 4 (strain Sb227).